Reading from the N-terminus, the 312-residue chain is Protease HtpX homolog (312 aa).

The next 2 helical transmembrane spans lie at 6-26 (TAVLLAGLTALFMVVGFAIGG) and 28-48 (GGMMVALLVAAGMNLFSYWYA). His130 contributes to the Zn(2+) binding site. Glu131 is an active-site residue. His134 lines the Zn(2+) pocket. Helical transmembrane passes span 145–165 (ITASIAGAISMLANFGLFFGG) and 173–193 (PFGGISAILMAILAPIAAMVV). Position 202 (Glu202) interacts with Zn(2+). Low complexity predominate over residues 287-297 (PAPARAAPARG). The disordered stretch occupies residues 287-312 (PAPARAAPARGPWGGNTGGTRRGPWG). Residues 298 to 312 (PWGGNTGGTRRGPWG) show a composition bias toward gly residues.

It belongs to the peptidase M48B family. The cofactor is Zn(2+).

It localises to the cell inner membrane. The sequence is that of Protease HtpX homolog from Azorhizobium caulinodans (strain ATCC 43989 / DSM 5975 / JCM 20966 / LMG 6465 / NBRC 14845 / NCIMB 13405 / ORS 571).